Consider the following 140-residue polypeptide: Organic hydroperoxide resistance protein-like (140 aa).

The protein belongs to the OsmC/Ohr family.

The polypeptide is Organic hydroperoxide resistance protein-like (Staphylococcus aureus (strain USA300)).